Here is a 110-residue protein sequence, read N- to C-terminus: MELLKATVLFTITAVVEIVGCYLPWLVIKQNKPLWLLLPAALSLALFAWLLTLHPSAAGRTYAAYGGIYIAVALAWLHWVDGVSLTRWDVAGATVAMVGMLIIMLQPASA.

A run of 4 helical transmembrane segments spans residues 8–28 (VLFTITAVVEIVGCYLPWLVI), 33–53 (PLWLLLPAALSLALFAWLLTL), 63–83 (AAYGGIYIAVALAWLHWVDGV), and 90–110 (VAGATVAMVGMLIIMLQPASA).

This sequence belongs to the UPF0060 family.

It is found in the cell inner membrane. This chain is UPF0060 membrane protein Veis_0342, found in Verminephrobacter eiseniae (strain EF01-2).